We begin with the raw amino-acid sequence, 335 residues long: Mycobacterial beta-ketoacyl-[acyl-carrier-protein] synthase III (335 aa).

Residues C122 and H258 contribute to the active site. Positions 259-263 (QANSR) are ACP-binding. N289 is a catalytic residue.

It belongs to the thiolase-like superfamily. FabH family. Homodimer.

It localises to the cytoplasm. It carries out the reaction malonyl-[ACP] + dodecanoyl-CoA + H(+) = 3-oxotetradecanoyl-[ACP] + CO2 + CoA. It functions in the pathway lipid metabolism; fatty acid biosynthesis. It participates in lipid metabolism; mycolic acid biosynthesis. Its function is as follows. Catalyzes the condensation reaction of fatty acid synthesis by the addition to an acyl acceptor of two carbons from malonyl-ACP. Catalyzes the first condensation reaction which initiates fatty acid synthesis and may therefore play a role in governing the total rate of fatty acid production. Possesses both acetoacetyl-ACP synthase and acetyl transacylase activities. Its substrate specificity determines the biosynthesis of branched-chain and/or straight-chain of fatty acids. In Mycobacterium avium (strain 104), this protein is Mycobacterial beta-ketoacyl-[acyl-carrier-protein] synthase III.